A 90-amino-acid chain; its full sequence is Protein A54 (90 aa).

The sequence is that of Protein A54 from Homo sapiens (Human).